Here is a 207-residue protein sequence, read N- to C-terminus: Redox-sensing transcriptional repressor Rex (207 aa).

A DNA-binding region (H-T-H motif) is located at residues 17 to 56 (IYLRYLSYLQQVEVTTVSSQQMGKNLDVNPAQIRKDLAAF). Residue 91–96 (GAGHLG) participates in NAD(+) binding.

It belongs to the transcriptional regulatory Rex family. As to quaternary structure, homodimer.

The protein resides in the cytoplasm. Functionally, modulates transcription in response to changes in cellular NADH/NAD(+) redox state. The polypeptide is Redox-sensing transcriptional repressor Rex (Brevibacillus brevis (strain 47 / JCM 6285 / NBRC 100599)).